Here is a 156-residue protein sequence, read N- to C-terminus: UPF0756 membrane protein Exig_2210 (156 aa).

Transmembrane regions (helical) follow at residues Leu-5–Ala-25, Trp-52–Phe-72, Ile-83–Gly-103, Pro-109–Val-129, and Val-131–Val-151.

Belongs to the UPF0756 family.

It localises to the cell membrane. This Exiguobacterium sibiricum (strain DSM 17290 / CCUG 55495 / CIP 109462 / JCM 13490 / 255-15) protein is UPF0756 membrane protein Exig_2210.